The primary structure comprises 156 residues: Small ribosomal subunit protein uS7 (156 aa).

The protein belongs to the universal ribosomal protein uS7 family. Part of the 30S ribosomal subunit. Contacts proteins S9 and S11.

Its function is as follows. One of the primary rRNA binding proteins, it binds directly to 16S rRNA where it nucleates assembly of the head domain of the 30S subunit. Is located at the subunit interface close to the decoding center, probably blocks exit of the E-site tRNA. This Anaeromyxobacter dehalogenans (strain 2CP-1 / ATCC BAA-258) protein is Small ribosomal subunit protein uS7.